Reading from the N-terminus, the 304-residue chain is Dermonecrotic toxin LiSicTox-betaIA1i (304 aa).

The signal sequence occupies residues 1-21 (MLLPAVISFIVYAVFLQEANG). Residues 22–26 (HAAER) constitute a propeptide that is removed on maturation. Residue His38 is part of the active site. Residues Glu58 and Asp60 each coordinate Mg(2+). The active-site Nucleophile is the His74. Cystine bridges form between Cys78–Cys84 and Cys80–Cys223. Residue Asp118 coordinates Mg(2+).

This sequence belongs to the arthropod phospholipase D family. Class II subfamily. Class IIb sub-subfamily. Mg(2+) serves as cofactor. In terms of tissue distribution, expressed by the venom gland.

Its subcellular location is the secreted. It catalyses the reaction an N-(acyl)-sphingosylphosphocholine = an N-(acyl)-sphingosyl-1,3-cyclic phosphate + choline. The enzyme catalyses an N-(acyl)-sphingosylphosphoethanolamine = an N-(acyl)-sphingosyl-1,3-cyclic phosphate + ethanolamine. The catalysed reaction is a 1-acyl-sn-glycero-3-phosphocholine = a 1-acyl-sn-glycero-2,3-cyclic phosphate + choline. It carries out the reaction a 1-acyl-sn-glycero-3-phosphoethanolamine = a 1-acyl-sn-glycero-2,3-cyclic phosphate + ethanolamine. In terms of biological role, dermonecrotic toxins cleave the phosphodiester linkage between the phosphate and headgroup of certain phospholipids (sphingolipid and lysolipid substrates), forming an alcohol (often choline) and a cyclic phosphate. This toxin acts on sphingomyelin (SM) with low activity. It may also act on ceramide phosphoethanolamine (CPE), lysophosphatidylcholine (LPC) and lysophosphatidylethanolamine (LPE), but not on lysophosphatidylserine (LPS), and lysophosphatidylglycerol (LPG). It acts by transphosphatidylation, releasing exclusively cyclic phosphate products as second products. Induces inflammatory response but no or very weak hemolysis, dermonecrosis, vascular permeability, edema, and cytotoxicity against renal epithelial cells. Causes swelling and erythema. In vivo, is not lethal to mice when intraperitoneally injected. In Loxosceles intermedia (Brown spider), this protein is Dermonecrotic toxin LiSicTox-betaIA1i.